The sequence spans 346 residues: 3-isopropylmalate dehydrogenase (346 aa).

76–87 (GPQWTDPNNRPE) is a binding site for NAD(+). Substrate is bound by residues R94, R104, R132, and D217. The Mg(2+) site is built by D217, D241, and D245. 275–287 (GSAPDIANQNLAN) contacts NAD(+).

Belongs to the isocitrate and isopropylmalate dehydrogenases family. LeuB type 1 subfamily. As to quaternary structure, homodimer. Requires Mg(2+) as cofactor. It depends on Mn(2+) as a cofactor.

The protein resides in the cytoplasm. It catalyses the reaction (2R,3S)-3-isopropylmalate + NAD(+) = 4-methyl-2-oxopentanoate + CO2 + NADH. The protein operates within amino-acid biosynthesis; L-leucine biosynthesis; L-leucine from 3-methyl-2-oxobutanoate: step 3/4. In terms of biological role, catalyzes the oxidation of 3-carboxy-2-hydroxy-4-methylpentanoate (3-isopropylmalate) to 3-carboxy-4-methyl-2-oxopentanoate. The product decarboxylates to 4-methyl-2 oxopentanoate. This chain is 3-isopropylmalate dehydrogenase, found in Staphylococcus haemolyticus (strain JCSC1435).